The sequence spans 90 residues: RNA-binding protein Hfq (90 aa).

Residues 9 to 68 enclose the Sm domain; the sequence is DPFLNALRRERVPVSIYLVNGIKLQGQVESFDQFVILLKNTVSQMVYKHAISTVVPARPF. The segment at 71–90 is disordered; sequence TGHQNAQGGYGPQDDVPSGE.

It belongs to the Hfq family. In terms of assembly, homohexamer.

RNA chaperone that binds small regulatory RNA (sRNAs) and mRNAs to facilitate mRNA translational regulation in response to envelope stress, environmental stress and changes in metabolite concentrations. Also binds with high specificity to tRNAs. This chain is RNA-binding protein Hfq, found in Shewanella putrefaciens (strain CN-32 / ATCC BAA-453).